The following is a 196-amino-acid chain: Probable nicotinate-nucleotide adenylyltransferase (196 aa).

The protein belongs to the NadD family.

The enzyme catalyses nicotinate beta-D-ribonucleotide + ATP + H(+) = deamido-NAD(+) + diphosphate. The protein operates within cofactor biosynthesis; NAD(+) biosynthesis; deamido-NAD(+) from nicotinate D-ribonucleotide: step 1/1. Its function is as follows. Catalyzes the reversible adenylation of nicotinate mononucleotide (NaMN) to nicotinic acid adenine dinucleotide (NaAD). The sequence is that of Probable nicotinate-nucleotide adenylyltransferase from Thermotoga sp. (strain RQ2).